The sequence spans 260 residues: Indole-3-glycerol phosphate synthase (260 aa).

The protein belongs to the TrpC family.

It catalyses the reaction 1-(2-carboxyphenylamino)-1-deoxy-D-ribulose 5-phosphate + H(+) = (1S,2R)-1-C-(indol-3-yl)glycerol 3-phosphate + CO2 + H2O. It functions in the pathway amino-acid biosynthesis; L-tryptophan biosynthesis; L-tryptophan from chorismate: step 4/5. The protein is Indole-3-glycerol phosphate synthase of Staphylococcus aureus (strain MRSA252).